Consider the following 159-residue polypeptide: Urease subunit beta 2 (159 aa).

Positions 1 to 24 are disordered; it reads MAKEPTKAAHPQPEQTKTNHKAHR.

This sequence belongs to the urease beta subunit family. Heterotrimer of UreA (gamma), UreB (beta) and UreC (alpha) subunits. Three heterotrimers associate to form the active enzyme.

The protein localises to the cytoplasm. The catalysed reaction is urea + 2 H2O + H(+) = hydrogencarbonate + 2 NH4(+). The protein operates within nitrogen metabolism; urea degradation; CO(2) and NH(3) from urea (urease route): step 1/1. Disrupting the ure2 operon has no effect on urease activity, or pathogen survival in BALB/c mice when inoculated by gavage, but confers slightly enhanced resistance to low pH killing in vitro. The protein is Urease subunit beta 2 of Brucella suis biovar 1 (strain 1330).